Reading from the N-terminus, the 221-residue chain is Putative adhesin P1-like protein MPN_131 (221 aa).

A compositionally biased stretch (low complexity) spans 13-36 (RYGNNHRGSNSSTSGVTTQGQSQN). Disordered regions lie at residues 13 to 51 (RYGN…NVGV) and 90 to 183 (GWRN…TPSG). The span at 37 to 48 (ASSNEPAPTFSN) shows a compositional bias: polar residues. Positions 130-139 (LKQDKADKSG) are enriched in basic and acidic residues. Polar residues-rich tracts occupy residues 149 to 160 (SGDNLTNYTNLP) and 174 to 183 (HSPTRTTPSG).

The protein belongs to the adhesin P1 family.

The sequence is that of Putative adhesin P1-like protein MPN_131 from Mycoplasma pneumoniae (strain ATCC 29342 / M129 / Subtype 1) (Mycoplasmoides pneumoniae).